Reading from the N-terminus, the 317-residue chain is Periplasmic [NiFe] hydrogenase small subunit 1 (317 aa).

Positions 1–49 form a signal peptide, tat-type signal; it reads MRFSVGLGKEGAEERLARRGVSRRDFLKFCTAIAVTMGMGPAFAPEVAR. Positions 67, 70, 164, 200, 238, 241, 266, and 272 each coordinate [4Fe-4S] cluster. [3Fe-4S] cluster is bound by residues Cys-281, Cys-299, and Cys-302.

The protein belongs to the [NiFe]/[NiFeSe] hydrogenase small subunit family. As to quaternary structure, heterodimer of a large and a small subunit. It depends on [3Fe-4S] cluster as a cofactor. [4Fe-4S] cluster is required as a cofactor. Predicted to be exported by the Tat system. The position of the signal peptide cleavage has not been experimentally proven.

It is found in the periplasm. The catalysed reaction is 2 Fe(III)-[cytochrome c3] + H2 = 2 Fe(II)-[cytochrome c3] + 2 H(+). In Nitratidesulfovibrio vulgaris (strain ATCC 29579 / DSM 644 / CCUG 34227 / NCIMB 8303 / VKM B-1760 / Hildenborough) (Desulfovibrio vulgaris), this protein is Periplasmic [NiFe] hydrogenase small subunit 1 (hynB1).